Reading from the N-terminus, the 71-residue chain is Long neurotoxin 3 (71 aa).

Cystine bridges form between Cys3/Cys20, Cys14/Cys41, Cys26/Cys30, Cys45/Cys56, and Cys57/Cys62.

The protein belongs to the three-finger toxin family. Long-chain subfamily. Type II alpha-neurotoxin sub-subfamily. As to expression, expressed by the venom gland.

It is found in the secreted. In terms of biological role, binds with high affinity to muscular (alpha-1/CHRNA1) and neuronal (alpha-7/CHRNA7) nicotinic acetylcholine receptor (nAChR) and inhibits acetylcholine from binding to the receptor, thereby impairing neuromuscular and neuronal transmission. The sequence is that of Long neurotoxin 3 from Naja naja (Indian cobra).